The following is a 339-amino-acid chain: Ketol-acid reductoisomerase (NADP(+)) (339 aa).

One can recognise a KARI N-terminal Rossmann domain in the interval 1–182 (MRVYYDRDAD…GGGRAGIIET (182 aa)). Residues 24-27 (YGSQ), Arg48, Ser51, Thr53, and 83-86 (DELQ) contribute to the NADP(+) site. The active site involves His108. Gly134 is an NADP(+) binding site. The KARI C-terminal knotted domain occupies 183–328 (TFKEECETDL…AELRAMMPWI (146 aa)). Asp191, Glu195, Glu227, and Glu231 together coordinate Mg(2+). Ser252 provides a ligand contact to substrate.

It belongs to the ketol-acid reductoisomerase family. It depends on Mg(2+) as a cofactor.

It carries out the reaction (2R)-2,3-dihydroxy-3-methylbutanoate + NADP(+) = (2S)-2-acetolactate + NADPH + H(+). The enzyme catalyses (2R,3R)-2,3-dihydroxy-3-methylpentanoate + NADP(+) = (S)-2-ethyl-2-hydroxy-3-oxobutanoate + NADPH + H(+). It participates in amino-acid biosynthesis; L-isoleucine biosynthesis; L-isoleucine from 2-oxobutanoate: step 2/4. It functions in the pathway amino-acid biosynthesis; L-valine biosynthesis; L-valine from pyruvate: step 2/4. In terms of biological role, involved in the biosynthesis of branched-chain amino acids (BCAA). Catalyzes an alkyl-migration followed by a ketol-acid reduction of (S)-2-acetolactate (S2AL) to yield (R)-2,3-dihydroxy-isovalerate. In the isomerase reaction, S2AL is rearranged via a Mg-dependent methyl migration to produce 3-hydroxy-3-methyl-2-ketobutyrate (HMKB). In the reductase reaction, this 2-ketoacid undergoes a metal-dependent reduction by NADPH to yield (R)-2,3-dihydroxy-isovalerate. In Beijerinckia indica subsp. indica (strain ATCC 9039 / DSM 1715 / NCIMB 8712), this protein is Ketol-acid reductoisomerase (NADP(+)).